Here is a 925-residue protein sequence, read N- to C-terminus: Leucine--tRNA ligase (925 aa).

The 'HIGH' region motif lies at 40–51; it reads PYPSGAGLHVGH. A 'KMSKS' region motif is present at residues 700–704; that stretch reads KMSKS. ATP is bound at residue K703.

This sequence belongs to the class-I aminoacyl-tRNA synthetase family.

It is found in the cytoplasm. It carries out the reaction tRNA(Leu) + L-leucine + ATP = L-leucyl-tRNA(Leu) + AMP + diphosphate. The sequence is that of Leucine--tRNA ligase from Porphyromonas gingivalis (strain ATCC 33277 / DSM 20709 / CIP 103683 / JCM 12257 / NCTC 11834 / 2561).